A 330-amino-acid chain; its full sequence is tRNA-modifying protein YgfZ (330 aa).

Residues tryptophan 28 and tryptophan 190 each coordinate folate.

This sequence belongs to the tRNA-modifying YgfZ family.

Its subcellular location is the cytoplasm. Its function is as follows. Folate-binding protein involved in regulating the level of ATP-DnaA and in the modification of some tRNAs. It is probably a key factor in regulatory networks that act via tRNA modification, such as initiation of chromosomal replication. In Yersinia enterocolitica serotype O:8 / biotype 1B (strain NCTC 13174 / 8081), this protein is tRNA-modifying protein YgfZ.